A 1045-amino-acid chain; its full sequence is Cation efflux system protein CusA (1045 aa).

Helical transmembrane passes span 14-34, 336-356, 361-381, 388-408, 444-464, 483-503, 530-550, 869-889, 896-916, 926-946, 983-1003, and 1010-1030; these read FLVL…IINT, LSGK…LFLW, ALVA…VMHF, IMSL…AIVM, VGPA…PIFT, AMAG…GYWI, VLHW…TVLW, KLKL…YLAF, LLII…LWWM, TGFI…LMYL, AMTV…TGAG, and IAAP…FIIP.

This sequence belongs to the resistance-nodulation-cell division (RND) (TC 2.A.6) family. In terms of assembly, the cus efflux system is composed of CusA, CusB, CusC and CusF.

Its subcellular location is the cell inner membrane. In terms of biological role, part of a cation efflux system that mediates resistance to copper and silver. The protein is Cation efflux system protein CusA (cusA) of Escherichia coli O157:H7.